Consider the following 308-residue polypeptide: Dual oxidase maturation factor 1 (308 aa).

At 1-21 (MQANIFPFYPQPRTPFKFDTK) the chain is on the extracellular side. Residues 22-42 (IIEIIIICIVTACTFIIILPG) form a helical membrane-spanning segment. The Cytoplasmic portion of the chain corresponds to 43–49 (IRGKSRS). The helical transmembrane segment at 50 to 70 (IWLLRILTSLFIGAVILAVNF) threads the bilayer. Residues 71-91 (TSDWEMGTITATTVYKSFSHS) lie on the Extracellular side of the membrane. A helical transmembrane segment spans residues 92 to 112 (MLNASIGLWIGLKGLNITLIG). The Cytoplasmic segment spans residues 113 to 175 (NPEYQLNETI…GLFQQYCIST (63 aa)). The chain crosses the membrane as a helical span at residues 176–198 (YYSSGIMWIAFCSWILYNVLFSM). Residue P199 is a topological domain, extracellular. A helical transmembrane segment spans residues 200–220 (VILYGIYMMFVTAICMLVSLI). Over 221–247 (SFASVRKAPVCNIQFGNSILKTHFGVS) the chain is Cytoplasmic. Residues 248–268 (YWLSLITGLLCLIISLVLLFL) traverse the membrane as a helical segment. Residues 269-308 (YKTQPKVLQLIFSYGEEEDLSNKSENEEEHSSVLSLNEIL) lie on the Extracellular side of the membrane. N-linked (GlcNAc...) asparagine glycosylation occurs at N290.

Belongs to the DUOXA family.

It localises to the membrane. Possible role in maturation and transport from the endoplasmic reticulum to the plasma membrane of functional dual oxidase. This Xenopus laevis (African clawed frog) protein is Dual oxidase maturation factor 1 (duoxa1).